A 200-amino-acid chain; its full sequence is MPCPGAPCCSLVATGSRVPFSGLKEEEEEDGEDDEEEEEEGFFQKVLTPLLSWLLSRRLWLGPQCSKLPLPSCCRQPPPAGPPVEGDGWLKSFQRSRRMCFTSKSFRPEPDMLYAQKAKGWQLTQDSGGWEVQDQCTRIWSKENLLALNTHSRRQKGKRENKVCVSTWQKSRGDRTYSSMATTPSMTKILEGCMYRKLKC.

The segment at P19–E39 is disordered. Over residues E25–E39 the composition is skewed to acidic residues.

Expressed in brain. Expressed in muscle tissues (at protein level).

The protein resides in the cytoplasm. This is Putative protein ATXN8OS from Homo sapiens (Human).